The following is a 536-amino-acid chain: Hydroxylamine oxidoreductase (536 aa).

Residues 1-26 form the signal peptide; sequence MFEIFKKPLSRIVGATFAFAGVTLLA. Heme c-binding residues include Cys-116, Cys-119, His-120, His-136, Cys-160, Cys-163, His-164, His-168, Cys-179, Cys-182, His-183, His-198, Cys-223, Cys-226, His-227, Cys-234, Cys-237, His-238, His-241, Cys-254, Cys-257, and His-258. His-263 contributes to the hydroxylamine binding site. His-274, Cys-301, Cys-304, His-305, His-311, Cys-346, Cys-349, His-350, His-443, and Tyr-451 together coordinate heme c.

Homotrimer; subunits are linked by two covalent bonds between Tyr-451 of one subunit and heme P460 of an adjacent subunit. Heme c is required as a cofactor.

It is found in the anammoxosome. The catalysed reaction is hydroxylamine + 3 Fe(III)-[cytochrome c] = nitric oxide + 3 Fe(II)-[cytochrome c] + 3 H(+). Functionally, catalyzes the oxidation of hydroxylamine to nitric oxide with cytochrome c acting as an electron acceptor. Does not oxidize hydroxylamine to nitrite. Also able to catalyze the four-electron oxidation of hydrazine to N(2) in vitro with reduced efficiency; however, this reaction is probably not physiological. The polypeptide is Hydroxylamine oxidoreductase (Kuenenia stuttgartiensis).